Here is a 102-residue protein sequence, read N- to C-terminus: Outer membrane protein assembly factor BamE (102 aa).

Residues 1 to 20 (MNNYIKALLIIICFSSCSIS) form the signal peptide.

It belongs to the BamE family. In terms of assembly, part of the Bam complex.

The protein resides in the cell outer membrane. Functionally, part of the outer membrane protein assembly complex, which is involved in assembly and insertion of beta-barrel proteins into the outer membrane. The chain is Outer membrane protein assembly factor BamE from Buchnera aphidicola subsp. Acyrthosiphon pisum (strain APS) (Acyrthosiphon pisum symbiotic bacterium).